A 183-amino-acid polypeptide reads, in one-letter code: Dual-action ribosomal maturation protein DarP (183 aa).

Residues 1 to 21 (MKQKPEDWLNDVPDNQEDDED) form a disordered region.

It belongs to the DarP family.

It localises to the cytoplasm. In terms of biological role, member of a network of 50S ribosomal subunit biogenesis factors which assembles along the 30S-50S interface, preventing incorrect 23S rRNA structures from forming. Promotes peptidyl transferase center (PTC) maturation. This chain is Dual-action ribosomal maturation protein DarP, found in Pectobacterium atrosepticum (strain SCRI 1043 / ATCC BAA-672) (Erwinia carotovora subsp. atroseptica).